Here is a 120-residue protein sequence, read N- to C-terminus: Ragulator complex protein LAMTOR4 homolog (120 aa).

The segment at 93–120 is disordered; it reads QNGVTTTTSSSSSNSVYNDASDSGAVLA. The segment covering 97-107 has biased composition (low complexity); it reads TTTTSSSSSNS.

Belongs to the LAMTOR4 family. Part of the Ragulator complex composed of Lamtor3, Lamtor2, CG14184, CG14812, and Lamtor4.

It is found in the lysosome. Its function is as follows. Regulator of the TOR pathway, a signaling cascade that promotes cell growth in response to growth factors, energy levels, and amino acids. As part of the Ragulator complex, may activate the TOR signaling cascade in response to amino acids. The polypeptide is Ragulator complex protein LAMTOR4 homolog (Drosophila melanogaster (Fruit fly)).